The following is a 478-amino-acid chain: Calcitonin receptor (478 aa).

An N-terminal signal peptide occupies residues 1 to 22 (MRFTFTRQFLAFFILISNPASI). Residues 23–146 (LPRSENLTFP…FTPEKLQNAY (124 aa)) are Extracellular-facing. N-linked (GlcNAc...) asparagine glycans are attached at residues Asn28, Asn73, Asn125, and Asn130. 3 disulfides stabilise this stretch: Cys55/Cys81, Cys72/Cys112, and Cys95/Cys134. The helical transmembrane segment at 147–169 (VLYYLAIVGHSMSIITLVVSLGI) threads the bilayer. At 170–181 (FVYFRSLGCQRV) the chain is on the cytoplasmic side. A helical transmembrane segment spans residues 182–202 (TLHKNMFLTYILNSMIIIIHL). Residues 203–219 (VEVVPNGELVRKDPVSC) are Extracellular-facing. An intrachain disulfide couples Cys219 to Cys289. The helical transmembrane segment at 220 to 242 (KILHFFHQYMMACNYFWMLCEGI) threads the bilayer. Topologically, residues 243–259 (YLHTLIVVSVFNEAKHL) are cytoplasmic. A helical transmembrane segment spans residues 260-280 (RWYYLLGWGFPLVPTTIHAIT). Residues 281–296 (RALYFNDNCWISVDTH) are Extracellular-facing. Residues 297 to 320 (LLYIIHGPVMVALVVNFFFLLNIV) form a helical membrane-spanning segment. Topologically, residues 321–340 (RVLVTKMRETHEAESYMYLK) are cytoplasmic. A helical transmembrane segment spans residues 341-359 (AVKATMILVPLLGIQFVVF). Residues 360–367 (PWRPSNKV) lie on the Extracellular side of the membrane. The chain crosses the membrane as a helical span at residues 368 to 394 (LGKIYDYFMHSLIHFQGFFVATIYCFC). The Cytoplasmic segment spans residues 395-478 (NNEVQTTLKR…LNIIEKESSA (84 aa)).

The protein belongs to the G-protein coupled receptor 2 family. Heterodimer of CALCR and RAMP1, RAMP2 or RAMP3; the receptor complexes function as AMYR1, AMYR2 and AMYR3 receptors, respectively, and respond to amylin/IAPP, calcitonin/CT and CGRP1 ligands. Interacts with GPRASP2.

The protein resides in the cell membrane. Functionally, g protein-coupled receptor activated by ligand peptides amylin (IAPP), calcitonin (CT/CALCA) and calcitonin gene-related peptide type 1 (CGRP1/CALCA). CALCR interacts with receptor-activity-modifying proteins RAMP1, 2 and 3 to form receptor complexes AMYR1, 2 and 3, respectively. IAPP, CT and CGRP1 activate CALCR and AMYRs with distinct modes of receptor activation resulting in specific phenotypes. Ligand binding causes a conformation change that triggers signaling via guanine nucleotide-binding proteins (G proteins) and modulates the activity of downstream effectors. Activates cAMP-dependent pathway. The protein is Calcitonin receptor of Cavia porcellus (Guinea pig).